The following is a 455-amino-acid chain: Phosphoglucosamine mutase (455 aa).

The active-site Phosphoserine intermediate is the Ser-104. Ser-104, Asp-243, Asp-245, and Asp-247 together coordinate Mg(2+). Ser-104 carries the post-translational modification Phosphoserine.

It belongs to the phosphohexose mutase family. Requires Mg(2+) as cofactor. In terms of processing, activated by phosphorylation.

The catalysed reaction is alpha-D-glucosamine 1-phosphate = D-glucosamine 6-phosphate. Catalyzes the conversion of glucosamine-6-phosphate to glucosamine-1-phosphate. The protein is Phosphoglucosamine mutase of Synechococcus sp. (strain CC9311).